A 412-amino-acid polypeptide reads, in one-letter code: Decapping nuclease RAI1 (412 aa).

Glu-196 contributes to the a divalent metal cation binding site. Residues Cys-228 and Glu-245 each contribute to the substrate site. A divalent metal cation-binding residues include Asp-247, Glu-265, and Leu-266. 2 residues coordinate substrate: Lys-267 and Gln-291.

Belongs to the DXO/Dom3Z family. Interacts with exr-1/rat1; the interaction is direct, stabilizes exr-1 protein structure and stimulates its exoribonuclease activity. The interaction also stimulates rai1 pyrophosphohydrolase activity, probably by recruiting it to mRNA substrates. It depends on a divalent metal cation as a cofactor.

Its subcellular location is the nucleus. The catalysed reaction is a 5'-end NAD(+)-phospho-ribonucleoside in mRNA + H2O = a 5'-end phospho-ribonucleoside in mRNA + NAD(+) + H(+). It carries out the reaction a 5'-end (N(7)-methyl 5'-triphosphoguanosine)-ribonucleoside-ribonucleotide in mRNA + H2O = a (N(7)-methyl 5'-triphosphoguanosine)-nucleoside + a 5'-end phospho-ribonucleoside in mRNA + H(+). It catalyses the reaction a 5'-end triphospho-ribonucleoside in mRNA + H2O = a 5'-end phospho-ribonucleoside in mRNA + diphosphate + H(+). Decapping enzyme for NAD-capped RNAs: specifically hydrolyzes the nicotinamide adenine dinucleotide (NAD) cap from a subset of RNAs by removing the entire NAD moiety from the 5'-end of an NAD-capped RNA. The NAD-cap is present at the 5'-end of some RNAs and snoRNAs. In contrast to the canonical 5'-end N7 methylguanosine (m7G) cap, the NAD cap promotes mRNA decay. Also acts as a non-canonical decapping enzyme that removes the entire cap structure of m7G capped or incompletely capped RNAs. Has decapping activity toward incomplete 5'-end m7G cap mRNAs such as unmethylated 5'-end-capped RNA (cap0), while it has no activity toward 2'-O-ribose methylated m7G cap (cap1). Also possesses RNA 5'-pyrophosphohydrolase activity by hydrolyzing the 5'-end triphosphate to release pyrophosphates. Stimulates exoribonuclease activity of Rat1, allowing it to degrade RNAs with stable secondary structure more effectively. This is Decapping nuclease RAI1 (rai1) from Neurospora crassa (strain ATCC 24698 / 74-OR23-1A / CBS 708.71 / DSM 1257 / FGSC 987).